We begin with the raw amino-acid sequence, 268 residues long: Hydroxyethylthiazole kinase (268 aa).

Met45 serves as a coordination point for substrate. ATP-binding residues include Arg121 and Thr167. Position 194 (Gly194) interacts with substrate.

Belongs to the Thz kinase family. Mg(2+) is required as a cofactor.

It carries out the reaction 5-(2-hydroxyethyl)-4-methylthiazole + ATP = 4-methyl-5-(2-phosphooxyethyl)-thiazole + ADP + H(+). Its pathway is cofactor biosynthesis; thiamine diphosphate biosynthesis; 4-methyl-5-(2-phosphoethyl)-thiazole from 5-(2-hydroxyethyl)-4-methylthiazole: step 1/1. In terms of biological role, catalyzes the phosphorylation of the hydroxyl group of 4-methyl-5-beta-hydroxyethylthiazole (THZ). This is Hydroxyethylthiazole kinase from Bacillus cereus (strain Q1).